The chain runs to 241 residues: Uridylate kinase (241 aa).

15-18 (KLSG) contacts ATP. The tract at residues 23–28 (GTEGFG) is involved in allosteric activation by GTP. UMP is bound at residue Gly-57. Residues Gly-58 and Arg-62 each coordinate ATP. UMP contacts are provided by residues Asp-77 and 138 to 145 (TGNPFFTT). The ATP site is built by Thr-165, Phe-171, and Asp-174.

It belongs to the UMP kinase family. Homohexamer.

The protein resides in the cytoplasm. It carries out the reaction UMP + ATP = UDP + ADP. It participates in pyrimidine metabolism; CTP biosynthesis via de novo pathway; UDP from UMP (UMPK route): step 1/1. With respect to regulation, allosterically activated by GTP. Inhibited by UTP. Functionally, catalyzes the reversible phosphorylation of UMP to UDP. The protein is Uridylate kinase of Shigella dysenteriae serotype 1 (strain Sd197).